Here is a 350-residue protein sequence, read N- to C-terminus: Ferredoxin--NADP reductase (350 aa).

FAD is bound by residues T22, E41, Q49, Y54, V94, F129, D295, and S336.

This sequence belongs to the ferredoxin--NADP reductase type 2 family. In terms of assembly, homodimer. Requires FAD as cofactor.

The catalysed reaction is 2 reduced [2Fe-2S]-[ferredoxin] + NADP(+) + H(+) = 2 oxidized [2Fe-2S]-[ferredoxin] + NADPH. This Chlorobium luteolum (strain DSM 273 / BCRC 81028 / 2530) (Pelodictyon luteolum) protein is Ferredoxin--NADP reductase.